Reading from the N-terminus, the 344-residue chain is Protein RecA (344 aa).

Residue 66–73 (GPESSGKT) coordinates ATP.

It belongs to the RecA family.

It localises to the cytoplasm. Functionally, can catalyze the hydrolysis of ATP in the presence of single-stranded DNA, the ATP-dependent uptake of single-stranded DNA by duplex DNA, and the ATP-dependent hybridization of homologous single-stranded DNAs. It interacts with LexA causing its activation and leading to its autocatalytic cleavage. This is Protein RecA from Methylobacillus flagellatus.